The following is a 264-amino-acid chain: Undecaprenyl-diphosphatase (264 aa).

The next 7 helical transmembrane spans lie at R38–F58, R75–V95, V106–Y126, V136–G156, F181–M201, V217–I237, and F242–S262.

The protein belongs to the UppP family.

It is found in the cell membrane. The catalysed reaction is di-trans,octa-cis-undecaprenyl diphosphate + H2O = di-trans,octa-cis-undecaprenyl phosphate + phosphate + H(+). Functionally, catalyzes the dephosphorylation of undecaprenyl diphosphate (UPP). Confers resistance to bacitracin. The protein is Undecaprenyl-diphosphatase of Stenotrophomonas maltophilia (strain K279a).